We begin with the raw amino-acid sequence, 204 residues long: Protein LURP-one-related 14 (204 aa).

It belongs to the LOR family.

Functionally, might be related to the phospholipid scramblase and tubby-like superfamily of membrane tethered transcription factors. This chain is Protein LURP-one-related 14, found in Arabidopsis thaliana (Mouse-ear cress).